The chain runs to 384 residues: Lipid-A-disaccharide synthase (384 aa).

The protein belongs to the LpxB family.

It catalyses the reaction a lipid X + a UDP-2-N,3-O-bis[(3R)-3-hydroxyacyl]-alpha-D-glucosamine = a lipid A disaccharide + UDP + H(+). It participates in bacterial outer membrane biogenesis; LPS lipid A biosynthesis. Condensation of UDP-2,3-diacylglucosamine and 2,3-diacylglucosamine-1-phosphate to form lipid A disaccharide, a precursor of lipid A, a phosphorylated glycolipid that anchors the lipopolysaccharide to the outer membrane of the cell. The protein is Lipid-A-disaccharide synthase of Geobacter sulfurreducens (strain ATCC 51573 / DSM 12127 / PCA).